The sequence spans 174 residues: Protein GrpE (174 aa).

A disordered region spans residues methionine 1–alanine 35. A compositionally biased stretch (acidic residues) spans glutamate 9 to threonine 25. Over residues threonine 26–alanine 35 the composition is skewed to basic and acidic residues.

It belongs to the GrpE family. Homodimer.

Its subcellular location is the cytoplasm. Participates actively in the response to hyperosmotic and heat shock by preventing the aggregation of stress-denatured proteins, in association with DnaK and GrpE. It is the nucleotide exchange factor for DnaK and may function as a thermosensor. Unfolded proteins bind initially to DnaJ; upon interaction with the DnaJ-bound protein, DnaK hydrolyzes its bound ATP, resulting in the formation of a stable complex. GrpE releases ADP from DnaK; ATP binding to DnaK triggers the release of the substrate protein, thus completing the reaction cycle. Several rounds of ATP-dependent interactions between DnaJ, DnaK and GrpE are required for fully efficient folding. This is Protein GrpE from Streptococcus pneumoniae (strain ATCC BAA-255 / R6).